Consider the following 623-residue polypeptide: Xaa-Pro aminopeptidase 1 (623 aa).

Arginine 77 lines the a peptide pocket. Lysine 304 bears the N6-acetyllysine mark. A peptide is bound at residue histidine 395. Aspartate 415, aspartate 426, and histidine 489 together coordinate Mn(2+). Positions 489, 498, and 523 each coordinate a peptide. Mn(2+) is bound by residues glutamate 523 and glutamate 537.

It belongs to the peptidase M24B family. In terms of assembly, homodimer. Mn(2+) serves as cofactor.

It is found in the cytoplasm. It localises to the cytosol. The enzyme catalyses Release of any N-terminal amino acid, including proline, that is linked to proline, even from a dipeptide or tripeptide.. In terms of biological role, metalloaminopeptidase that catalyzes the removal of a penultimate prolyl residue from the N-termini of peptides, such as Arg-Pro-Pro. Contributes to the degradation of bradykinin. In Mus musculus (Mouse), this protein is Xaa-Pro aminopeptidase 1.